A 319-amino-acid chain; its full sequence is Tyrosine phosphatase-like protein N3 (319 aa).

The 279-residue stretch at 7 to 285 (SNLSIHEFWR…LIINKILLHS (279 aa)) folds into the Tyrosine-protein phosphatase domain.

It belongs to the protein-tyrosine phosphatase family.

This Microplitis demolitor bracovirus (isolate Webb) (MdBV) protein is Tyrosine phosphatase-like protein N3 (N7).